The following is a 512-amino-acid chain: Glycerol kinase 1 (512 aa).

Threonine 18 is a binding site for ADP. The ATP site is built by threonine 18, threonine 19, and serine 20. Threonine 18 is a binding site for sn-glycerol 3-phosphate. Arginine 22 is a binding site for ADP. Residues arginine 88, glutamate 89, tyrosine 140, and aspartate 255 each contribute to the sn-glycerol 3-phosphate site. Glycerol-binding residues include arginine 88, glutamate 89, tyrosine 140, aspartate 255, and glutamine 256. The ADP site is built by threonine 277 and glycine 321. Residues threonine 277, glycine 321, glutamine 325, and glycine 422 each contribute to the ATP site. 2 residues coordinate ADP: glycine 422 and asparagine 426.

This sequence belongs to the FGGY kinase family.

It carries out the reaction glycerol + ATP = sn-glycerol 3-phosphate + ADP + H(+). Its pathway is polyol metabolism; glycerol degradation via glycerol kinase pathway; sn-glycerol 3-phosphate from glycerol: step 1/1. With respect to regulation, inhibited by fructose 1,6-bisphosphate (FBP). Functionally, key enzyme in the regulation of glycerol uptake and metabolism. Catalyzes the phosphorylation of glycerol to yield sn-glycerol 3-phosphate. The sequence is that of Glycerol kinase 1 from Streptomyces avermitilis (strain ATCC 31267 / DSM 46492 / JCM 5070 / NBRC 14893 / NCIMB 12804 / NRRL 8165 / MA-4680).